Reading from the N-terminus, the 336-residue chain is Transcription factor MYB29 (336 aa).

2 HTH myb-type domains span residues 9–65 (GEGL…KPDI) and 66–116 (KRGE…KKLL). DNA-binding regions (H-T-H motif) lie at residues 37–61 (WRDI…ANYL) and 89–112 (WSVI…NTHL). The tract at residues 127-170 (KPLAYDSNPDEQSQSGSISPKSLPPSSSKNVPEITSSDETPKYD) is disordered. Positions 141–154 (SGSISPKSLPPSSS) are enriched in low complexity. Polar residues predominate over residues 155-164 (KNVPEITSSD).

As to quaternary structure, can form complexes with MYC2, MYC3 or MYC4. As to expression, expressed in both vegetative and generative organs. Mostly present in seedlings, inflorescences, roots and stems, and, to a lower extent, in leaves (in midvein and trichomes) and siliques.

It localises to the nucleus. Plays a minor rheostat role in aliphatic glucosinolates (GLSs) biosynthesis, mostly short chained. Together with MYB28/HAG1 and MYB76/HAG2, promotes aliphatic glucosinolate biosynthesis but represses indolic glucosinolate biosynthesis. Prevents insect performance (e.g. lepidopteran insect Mamestra brassicae) by promoting glucosinolates. The polypeptide is Transcription factor MYB29 (MYB29) (Arabidopsis thaliana (Mouse-ear cress)).